A 308-amino-acid chain; its full sequence is Mitoferrin (308 aa).

The next 6 helical transmembrane spans lie at Gly-13–Ala-29, Ile-69–Val-89, Ile-111–Met-131, Tyr-168–Ala-184, Leu-213–Val-233, and Met-285–Phe-302. Solcar repeat units follow at residues Gly-14 to Lys-100, His-108 to Ile-192, and Tyr-207 to Ile-305.

This sequence belongs to the mitochondrial carrier (TC 2.A.29) family.

The protein resides in the mitochondrion inner membrane. In terms of biological role, mitochondrial solute carriers shuttle metabolites, nucleotides, and cofactors through the mitochondrial inner membrane. Mitochondrial iron transporter that mediates iron uptake. Probably required for heme synthesis of hemoproteins and Fe-S cluster assembly. This chain is Mitoferrin (mcfF), found in Dictyostelium discoideum (Social amoeba).